A 524-amino-acid polypeptide reads, in one-letter code: Thermosome subunit 3 (524 aa).

The protein belongs to the TCP-1 chaperonin family. As to quaternary structure, the thermosome or CCT complex is a oligomeric complex of two octameric double-ring structures; the complex is probably a heterooligomer of CCT1, CCT2 and CCT3 with yet unknown stoichiometry.

Its function is as follows. Molecular chaperone that assists in the folding or refolding of nascent or denatured proteins along with ATP hydrolysis. ATPase activity is highest in thermosome assemblies containing CCT1:CCT2, followed by assemblies containing CCT1:CCT2:CCT3. Not required for thermosome ATPase activity. Not required for growth. In Haloferax volcanii (strain ATCC 29605 / DSM 3757 / JCM 8879 / NBRC 14742 / NCIMB 2012 / VKM B-1768 / DS2) (Halobacterium volcanii), this protein is Thermosome subunit 3 (cct3).